We begin with the raw amino-acid sequence, 270 residues long: Phospholysine phosphohistidine inorganic pyrophosphate phosphatase (270 aa).

Residues aspartate 17 and serine 19 each coordinate Mg(2+). Substrate contacts are provided by residues 17 to 19, 54 to 55, and lysine 189; these read DIS and TN. Position 214 (aspartate 214) interacts with Mg(2+).

It belongs to the HAD-like hydrolase superfamily. In terms of assembly, homodimer. It depends on Mg(2+) as a cofactor.

It is found in the cytoplasm. The protein resides in the nucleus. The catalysed reaction is diphosphate + H2O = 2 phosphate + H(+). In terms of biological role, phosphatase that hydrolyzes imidodiphosphate, 3-phosphohistidine and 6-phospholysine. Has broad substrate specificity and can also hydrolyze inorganic diphosphate, but with lower efficiency. This chain is Phospholysine phosphohistidine inorganic pyrophosphate phosphatase (Lhpp), found in Mus musculus (Mouse).